Reading from the N-terminus, the 48-residue chain is Fimbrial assembly protein, serogroup F1 (48 aa).

The polypeptide is Fimbrial assembly protein, serogroup F1 (fimB) (Dichelobacter nodosus (Bacteroides nodosus)).